The primary structure comprises 382 residues: Proton extrusion protein PxcA (382 aa).

4 helical membrane passes run 162–182 (VLLL…TYLI), 257–277 (AIKN…VCLM), 305–325 (IILF…SVLL), and 340–360 (FVNL…KYWI).

This sequence belongs to the CemA family.

The protein resides in the cell inner membrane. Functionally, required for H(+) efflux immediately after light irradiation to form a rapid H(+) concentration gradient across the thylakoid membranes. Together with PxcL, contributes to transient H(+) uptake following dark to light transition. This chain is Proton extrusion protein PxcA, found in Synechococcus sp. (strain CC9605).